The chain runs to 239 residues: Small ribosomal subunit protein uS3 (239 aa).

In terms of domain architecture, KH type-2 spans valine 39–arginine 107. Residues lysine 217 to arginine 239 are disordered.

Belongs to the universal ribosomal protein uS3 family. Part of the 30S ribosomal subunit. Forms a tight complex with proteins S10 and S14.

Binds the lower part of the 30S subunit head. Binds mRNA in the 70S ribosome, positioning it for translation. This is Small ribosomal subunit protein uS3 from Xylella fastidiosa (strain 9a5c).